The chain runs to 166 residues: Large ribosomal subunit protein uL10 (166 aa).

The protein belongs to the universal ribosomal protein uL10 family. In terms of assembly, part of the ribosomal stalk of the 50S ribosomal subunit. The N-terminus interacts with L11 and the large rRNA to form the base of the stalk. The C-terminus forms an elongated spine to which L12 dimers bind in a sequential fashion forming a multimeric L10(L12)X complex.

Functionally, forms part of the ribosomal stalk, playing a central role in the interaction of the ribosome with GTP-bound translation factors. In Streptococcus sanguinis (strain SK36), this protein is Large ribosomal subunit protein uL10.